The chain runs to 291 residues: GTPase Era (291 aa).

Residues 2–167 (KSGFVSIIGR…LDEIVKCLNE (166 aa)) enclose the Era-type G domain. Residues 10-17 (GRTNAGKS) form a G1 region. GTP is bound at residue 10–17 (GRTNAGKS). The interval 36 to 40 (NATRR) is G2. Residues 57 to 60 (DTPG) form a G3 region. Residues 57-61 (DTPGL) and 116-119 (NKVD) each bind GTP. A G4 region spans residues 116–119 (NKVD). Residues 146–148 (YSS) are G5. A KH type-2 domain is found at 186 to 274 (YRDFILESIY…LLKLFVTVKK (89 aa)).

The protein belongs to the TRAFAC class TrmE-Era-EngA-EngB-Septin-like GTPase superfamily. Era GTPase family. Monomer.

The protein localises to the cytoplasm. It is found in the cell inner membrane. In terms of biological role, an essential GTPase that binds both GDP and GTP, with rapid nucleotide exchange. Plays a role in 16S rRNA processing and 30S ribosomal subunit biogenesis and possibly also in cell cycle regulation and energy metabolism. The protein is GTPase Era of Campylobacter jejuni subsp. doylei (strain ATCC BAA-1458 / RM4099 / 269.97).